Here is a 337-residue protein sequence, read N- to C-terminus: Probable arabinose 5-phosphate isomerase (337 aa).

Residues 58-201 (VIDLILACEG…AVSLITARNF (144 aa)) enclose the SIS domain. Residues 92–93 (GT), His99, His105, 131–140 (KLIPSLKNFG), 165–167 (TVE), Thr237, and Asp290 contribute to the substrate site. Position 99 (His99) interacts with Zn(2+). The CBS 1 domain maps to 227–284 (MQTRLPTILPTTNFTDCLTVMNEGRMGVALVMENEQLKGIITDGDIRRALTANGAGTL). In terms of domain architecture, CBS 2 spans 292–337 (MTSSPKTIHQDEFLSKAEDFMKAKKIHSLVVVNDENHVVGLVEFSS).

The protein belongs to the SIS family. GutQ/KpsF subfamily.

The catalysed reaction is D-arabinose 5-phosphate = D-ribulose 5-phosphate. In terms of biological role, catalyzes the reversible aldol-ketol isomerization between D-ribulose 5-phosphate (Ru5P) and D-arabinose 5-phosphate (A5P). This is Probable arabinose 5-phosphate isomerase from Haemophilus influenzae (strain ATCC 51907 / DSM 11121 / KW20 / Rd).